A 754-amino-acid chain; its full sequence is Nitrate reductase (754 aa).

The segment at residues 1–31 (MKFTRRSFVKASALATAMVAAGCSPQPVAPK) is a signal peptide (tat-type signal). In terms of domain architecture, 4Fe-4S Mo/W bis-MGD-type spans 39-95 (ATWYKTVCRYCGVGCGVMVAAKDNRVVAVKGDTENPVNKGLLCVKGYYLDRIMNTEE). 4 residues coordinate [4Fe-4S] cluster: cysteine 46, cysteine 49, cysteine 53, and cysteine 81. Mo-bis(molybdopterin guanine dinucleotide)-binding positions include lysine 83, glutamine 144, asparagine 169, cysteine 173, 256-258 (GTD), methionine 341, glutamine 345, asparagine 451, lysine 497, aspartate 524, 642-651 (TGRILEHWHT), asparagine 728, and lysine 745.

The protein belongs to the prokaryotic molybdopterin-containing oxidoreductase family. NasA/NapA/NarB subfamily. As to quaternary structure, component of the nitrate reductase NapAB complex composed of NapA and NapB. It depends on [4Fe-4S] cluster as a cofactor. Mo-bis(molybdopterin guanine dinucleotide) is required as a cofactor. In terms of processing, predicted to be exported by the Tat system. The position of the signal peptide cleavage has not been experimentally proven.

It is found in the secreted. The catalysed reaction is 2 Fe(II)-[cytochrome] + nitrate + 2 H(+) = 2 Fe(III)-[cytochrome] + nitrite + H2O. Functionally, catalytic subunit of the nitrate reductase complex NapAB. Receives electrons from NapB and catalyzes the reduction of nitrate to nitrite. This is Nitrate reductase from Symbiobacterium thermophilum (strain DSM 24528 / JCM 14929 / IAM 14863 / T).